The chain runs to 214 residues: Octanoyltransferase (214 aa).

In terms of domain architecture, BPL/LPL catalytic spans 32–207; it reads EDTLDEIWLV…NLLALLNHPP (176 aa). Substrate contacts are provided by residues 71–78, 138–140, and 151–153; these read RGGQVTYH, SLG, and GLA. Residue Cys169 is the Acyl-thioester intermediate of the active site.

This sequence belongs to the LipB family.

Its subcellular location is the cytoplasm. It carries out the reaction octanoyl-[ACP] + L-lysyl-[protein] = N(6)-octanoyl-L-lysyl-[protein] + holo-[ACP] + H(+). It functions in the pathway protein modification; protein lipoylation via endogenous pathway; protein N(6)-(lipoyl)lysine from octanoyl-[acyl-carrier-protein]: step 1/2. In terms of biological role, catalyzes the transfer of endogenously produced octanoic acid from octanoyl-acyl-carrier-protein onto the lipoyl domains of lipoate-dependent enzymes. Lipoyl-ACP can also act as a substrate although octanoyl-ACP is likely to be the physiological substrate. In Klebsiella pneumoniae subsp. pneumoniae (strain ATCC 700721 / MGH 78578), this protein is Octanoyltransferase.